We begin with the raw amino-acid sequence, 493 residues long: MGFHQIDERNQALLSKIALDDGHGENSPYFDGWKAYDNDPFHPENNPLGVIQMGLAENQLSFDMIVDWIRKHPEASICTPEGLERFKSIANFQDYHGLPEFRNAIANFMGKVRGGRVKFDPSRIVMGGGATGASETVIFCLADPGDAFLVPSPYYAGFDRDLKWRTRAQIIRVHCNGSNNFQVTKAALEIAYKKAQEANMKVKGVIITNPSNPLGTTYDRDTLKTLVTFVNQHDIHLICDEIYSATVFKAPTFTSIAEIVEQMEHCKKELIHILYSLSKDMGLPGFRVGIIYSYNDVVVRRARQMSSFGLVSSQTQHLLAAMLSDEDFVDKFLAENSKRVGERHARFTKELDKMGITCLNSNAGVFVWMDLRRLLKDQTFKAEMELWRVIINEVKLNVSPGSSFHVTEPGWFRVCFANMDDNTVDVALNRIHSFVENIDKKEDNTVAMPSKTRHRDNKLRLSFSFSGRRYDEGNVLNSPHTMSPHSPLVIAKN.

Lys-279 carries the N6-(pyridoxal phosphate)lysine modification.

This sequence belongs to the class-I pyridoxal-phosphate-dependent aminotransferase family. In terms of assembly, homodimer. The cofactor is pyridoxal 5'-phosphate.

It catalyses the reaction S-adenosyl-L-methionine = 1-aminocyclopropane-1-carboxylate + S-methyl-5'-thioadenosine + H(+). It functions in the pathway alkene biosynthesis; ethylene biosynthesis via S-adenosyl-L-methionine; ethylene from S-adenosyl-L-methionine: step 1/2. Catalyzes the formation of 1-aminocyclopropane-1-carboxylate, a direct precursor of ethylene in higher plants. The chain is 1-aminocyclopropane-1-carboxylate synthase 1 (ACC1A) from Cucurbita pepo (Vegetable marrow).